Here is a 133-residue protein sequence, read N- to C-terminus: uncharacterized protein (133 aa).

A DNA-binding region (recombinase) is located at residues 1 to 82 (MIDKIKKGYS…QKMLHDRQNF (82 aa)).

This is an uncharacterized protein from Bacillus phage phi105 (Bacteriophage phi-105).